Consider the following 283-residue polypeptide: Pantothenate synthetase (283 aa).

30-37 serves as a coordination point for ATP; that stretch reads MGTLHDGH. Histidine 37 functions as the Proton donor in the catalytic mechanism. (R)-pantoate is bound at residue glutamine 61. Glutamine 61 contributes to the beta-alanine binding site. Residue 148 to 151 coordinates ATP; it reads GLKD. (R)-pantoate is bound at residue glutamine 154. 185–188 provides a ligand contact to ATP; the sequence is MSSR.

It belongs to the pantothenate synthetase family. In terms of assembly, homodimer.

It localises to the cytoplasm. The enzyme catalyses (R)-pantoate + beta-alanine + ATP = (R)-pantothenate + AMP + diphosphate + H(+). It participates in cofactor biosynthesis; (R)-pantothenate biosynthesis; (R)-pantothenate from (R)-pantoate and beta-alanine: step 1/1. Functionally, catalyzes the condensation of pantoate with beta-alanine in an ATP-dependent reaction via a pantoyl-adenylate intermediate. The protein is Pantothenate synthetase of Leptospira biflexa serovar Patoc (strain Patoc 1 / Ames).